The primary structure comprises 331 residues: Serpentine receptor class alpha-1 (331 aa).

7 helical membrane-spanning segments follow: residues 22–42 (FAVF…VIAV), 57–77 (IILV…AIIS), 104–124 (YTEV…GILI), 143–163 (VGII…QIII), 189–209 (FLFI…AVMF), 238–258 (ICVV…GVLI), and 274–294 (LITW…ILIF).

Belongs to the nematode receptor-like protein sra family.

The protein resides in the membrane. The chain is Serpentine receptor class alpha-1 (sra-1) from Caenorhabditis elegans.